A 195-amino-acid chain; its full sequence is Putative archaetidylserine decarboxylase proenzyme (195 aa).

Serine 159 serves as the catalytic Schiff-base intermediate with substrate; via pyruvic acid. Pyruvic acid (Ser); by autocatalysis is present on serine 159.

This sequence belongs to the phosphatidylserine decarboxylase family. PSD-A subfamily. Heterodimer of a large membrane-associated beta subunit and a small pyruvoyl-containing alpha subunit. Pyruvate serves as cofactor. Post-translationally, is synthesized initially as an inactive proenzyme. Formation of the active enzyme involves a self-maturation process in which the active site pyruvoyl group is generated from an internal serine residue via an autocatalytic post-translational modification. Two non-identical subunits are generated from the proenzyme in this reaction, and the pyruvate is formed at the N-terminus of the alpha chain, which is derived from the carboxyl end of the proenzyme. The autoendoproteolytic cleavage occurs by a canonical serine protease mechanism, in which the side chain hydroxyl group of the serine supplies its oxygen atom to form the C-terminus of the beta chain, while the remainder of the serine residue undergoes an oxidative deamination to produce ammonia and the pyruvoyl prosthetic group on the alpha chain. During this reaction, the Ser that is part of the protease active site of the proenzyme becomes the pyruvoyl prosthetic group, which constitutes an essential element of the active site of the mature decarboxylase. In terms of processing, is synthesized initially as an inactive proenzyme. Formation of the active enzyme involves a self-maturation process in which the active site pyruvoyl group is generated from an internal serine residue via an autocatalytic post-translational modification. Two non-identical subunits are generated from the proenzyme in this reaction, and the pyruvate is formed at the N-terminus of the alpha chain, which is derived from the carboxyl end of the proenzyme. The post-translation cleavage follows an unusual pathway, termed non-hydrolytic serinolysis, in which the side chain hydroxyl group of the serine supplies its oxygen atom to form the C-terminus of the beta chain, while the remainder of the serine residue undergoes an oxidative deamination to produce ammonia and the pyruvoyl prosthetic group on the alpha chain.

The protein resides in the cell membrane. It catalyses the reaction archaetidylserine + H(+) = archaetidylethanolamine + CO2. Functionally, catalyzes the formation of archaetidylethanolamine (PtdEtn) from archaetidylserine (PtdSer). The polypeptide is Putative archaetidylserine decarboxylase proenzyme (Archaeoglobus fulgidus (strain ATCC 49558 / DSM 4304 / JCM 9628 / NBRC 100126 / VC-16)).